The sequence spans 126 residues: MLLTLLKGKLHRARVTHADLHYEGSCGIDGDLLDLAGIRENESIDIYNVSNGKRFRTYAIRAEAGSGIISLNGAAAYMADLGDIVIICAYAQMDEQEADTHKPKLVYCNEDNTVKDTANIIPVQVS.

Serine 25 (schiff-base intermediate with substrate; via pyruvic acid) is an active-site residue. At serine 25 the chain carries Pyruvic acid (Ser). Residue threonine 57 participates in substrate binding. Residue tyrosine 58 is the Proton donor of the active site. Glycine 73–alanine 75 serves as a coordination point for substrate.

Belongs to the PanD family. In terms of assembly, heterooctamer of four alpha and four beta subunits. Requires pyruvate as cofactor. Post-translationally, is synthesized initially as an inactive proenzyme, which is activated by self-cleavage at a specific serine bond to produce a beta-subunit with a hydroxyl group at its C-terminus and an alpha-subunit with a pyruvoyl group at its N-terminus.

The protein resides in the cytoplasm. The enzyme catalyses L-aspartate + H(+) = beta-alanine + CO2. It functions in the pathway cofactor biosynthesis; (R)-pantothenate biosynthesis; beta-alanine from L-aspartate: step 1/1. Catalyzes the pyruvoyl-dependent decarboxylation of aspartate to produce beta-alanine. This is Aspartate 1-decarboxylase from Psychrobacter sp. (strain PRwf-1).